A 239-amino-acid chain; its full sequence is MADKKANDSFQMSIYEHLEELRQRSIESIVALLISMVVCSLNINILIELIKQPAIGIKFLQLSPGEYFFTSIKITLYLGIILSSPIIFYEIIIFIIPGLTKKERRLLIPILIASGCLFVAGLIFGYIYITPIAVRFFINYGKDMIEPIWSFKEYFDFIILSLFSTAISFQIPIFQILLGSLKIINSKMMLSVWRYVVVGSTIFSAIITPSTDPLIQLFLSVAVMFLYFSSILVLKLFKL.

The next 6 membrane-spanning stretches (helical) occupy residues 30-50, 76-96, 107-127, 157-177, 188-208, and 214-234; these read VALL…IELI, LYLG…IFII, LIPI…FGYI, FIIL…FQIL, MMLS…AIIT, and LIQL…ILVL.

The protein belongs to the TatC family.

The protein resides in the plastid. Its subcellular location is the chloroplast membrane. This is an uncharacterized protein from Cyanidium caldarium (Red alga).